Consider the following 105-residue polypeptide: ESAT-6-like protein EsxU (105 aa).

It belongs to the WXG100 family. CFP-10 subfamily. Forms a tight 1:1 complex with EsxT. Complex formation results in induction of alpha-helical conformation and stability against chemical denaturation.

The protein resides in the secreted. The sequence is that of ESAT-6-like protein EsxU from Mycobacterium tuberculosis (strain ATCC 25618 / H37Rv).